The sequence spans 158 residues: Cytochrome b562 (158 aa).

4 helical membrane-spanning segments follow: residues 12 to 32, 46 to 66, 87 to 107, and 121 to 141; these read ITLHWAIAGLVLFNYIFGETM, AGVGHYLHVVVGLAVLVLTLV, VAAGLQGLLYLLTLLVPALGM, and HVLAANAIMLLALVHAVSALF. Heme b contacts are provided by histidine 15 and histidine 53. Heme b contacts are provided by histidine 121 and histidine 135.

This sequence belongs to the cytochrome b561 family. Homodimer. The cofactor is heme b.

The protein localises to the cell membrane. Cytochrome b562 is an integral component of the cytochrome b-c1 complex in the cyclic electron transfer system of photosynthetic bacteria. This is Cytochrome b562 from Cereibacter sphaeroides (strain ATCC 17023 / DSM 158 / JCM 6121 / CCUG 31486 / LMG 2827 / NBRC 12203 / NCIMB 8253 / ATH 2.4.1.) (Rhodobacter sphaeroides).